The chain runs to 311 residues: Phospholipid phosphatase 3 (311 aa).

Topologically, residues 1–33 are cytoplasmic; that stretch reads MQNYKYDKAIVAESKNGGSPALNNNPRKGGSKR. The residue at position 19 (Ser-19) is a Phosphoserine. A helical membrane pass occupies residues 34–54; the sequence is VLLICLDLFCLFMAGLPFIII. Topologically, residues 55–85 are extracellular; sequence ETSTIKPYHRGFYCNDESIKYPQKTGETIND. Residues 86–106 form a helical membrane-spanning segment; that stretch reads AVLTAVGIVIAILAIITGEFY. Over 107–123 the chain is Cytoplasmic; sequence RIYYLKEKSRSTIQNPY. Residues 109–110 carry the Dityrosine basolateral targeting motif motif; it reads YY. A helical membrane pass occupies residues 124 to 144; that stretch reads VAALYKQVGCFLFGCAISQSF. Topologically, residues 145 to 194 are extracellular; that stretch reads TDIAKVSIGRLRPHFLNVCNPDFSQINCSVGYIQNYRCRGEDSKVQEARK. The interval 149 to 157 is phosphatase sequence motif I; that stretch reads KVSIGRLRP. Asn-171 is a glycosylation site (N-linked (GlcNAc...) asparagine). The Integrin-binding motif signature appears at 183-185; that stretch reads RGE. The chain crosses the membrane as a helical span at residues 195–215; that stretch reads SFFSGHASFSMYTMLYLVLYL. A phosphatase sequence motif II region spans residues 197-200; that stretch reads FSGH. His-200 (proton donors) is an active-site residue. Topologically, residues 216 to 226 are cytoplasmic; the sequence is QARFTWRGARL. Residues 227-244 form a helical membrane-spanning segment; it reads LRPLLQFTLIMMAFYTGL. The tract at residues 245–256 is phosphatase sequence motif III; it reads SRVSDHKHHPSD. At 245–258 the chain is on the extracellular side; that stretch reads SRVSDHKHHPSDVL. His-252 acts as the Nucleophile in catalysis. Residues 259-279 form a helical membrane-spanning segment; the sequence is AGFAQGALVACCIVFFVSDLF. Residues 276 to 311 are mediates interaction with CTNND1; that stretch reads SDLFKTKTTLSLPPSAIRKDMLSPVDIDRSNHHNMV. Over 280-311 the chain is Cytoplasmic; that stretch reads KTKTTLSLPPSAIRKDMLSPVDIDRSNHHNMV.

Belongs to the PA-phosphatase related phosphoesterase family. In terms of assembly, forms functional homodimers and homooligomers that are not required for substrate recognition and catalytic activity. Can also form heterooligomers with other PLPP2 and PLPP3. Interacts with CTNND1; negatively regulates the PLPP3-mediated stabilization of beta-catenin/CTNNB1. N-glycosylated. Contains high-mannose oligosaccharides.

It localises to the cell membrane. Its subcellular location is the basolateral cell membrane. The protein resides in the endoplasmic reticulum membrane. The protein localises to the endoplasmic reticulum-Golgi intermediate compartment membrane. It is found in the golgi apparatus membrane. It localises to the golgi apparatus. Its subcellular location is the trans-Golgi network membrane. The protein resides in the membrane raft. It catalyses the reaction a 1,2-diacyl-sn-glycero-3-phosphate + H2O = a 1,2-diacyl-sn-glycerol + phosphate. It carries out the reaction 1,2-dihexadecanoyl-sn-glycero-3-phosphate + H2O = 1,2-dihexadecanoyl-sn-glycerol + phosphate. The enzyme catalyses 1,2-di-(9Z-octadecenoyl)-sn-glycero-3-phosphate + H2O = 1,2-di-(9Z-octadecenoyl)-sn-glycerol + phosphate. The catalysed reaction is a monoacyl-sn-glycero-3-phosphate + H2O = a monoacylglycerol + phosphate. It catalyses the reaction (9Z)-octadecenoyl-sn-glycero-3-phosphate + H2O = (9Z-octadecenoyl)-glycerol + phosphate. It carries out the reaction sphing-4-enine 1-phosphate + H2O = sphing-4-enine + phosphate. The enzyme catalyses an N-acylsphing-4-enine 1-phosphate + H2O = an N-acylsphing-4-enine + phosphate. The catalysed reaction is N-(octanoyl)-sphing-4-enine-1-phosphate + H2O = N-octanoylsphing-4-enine + phosphate. It catalyses the reaction N-(9Z-octadecenoyl)-ethanolamine phosphate + H2O = N-(9Z-octadecenoyl) ethanolamine + phosphate. It participates in lipid metabolism; phospholipid metabolism. With respect to regulation, magnesium-independent phospholipid phosphatase. Insensitive to N-ethylmaleimide. Inhibited by sphingosine, zinc ions and modestly by propanolol. In terms of biological role, magnesium-independent phospholipid phosphatase of the plasma membrane that catalyzes the dephosphorylation of a variety of glycerolipid and sphingolipid phosphate esters including phosphatidate/PA, lysophosphatidate/LPA, diacylglycerol pyrophosphate/DGPP, sphingosine 1-phosphate/S1P and ceramide 1-phosphate/C1P. Also acts on N-oleoyl ethanolamine phosphate/N-(9Z-octadecenoyl)-ethanolamine phosphate, a potential physiological compound. Has both an extracellular and an intracellular phosphatase activity, allowing the hydrolysis and the cellular uptake of these bioactive lipid mediators from the milieu, regulating signal transduction in different cellular processes. Through the dephosphorylation of extracellular sphingosine-1-phosphate and the regulation of its extra- and intracellular availability, plays a role in vascular homeostasis, regulating endothelial cell migration, adhesion, survival, proliferation and the production of pro-inflammatory cytokines. By maintaining the appropriate levels of this lipid in the cerebellum, also ensure its proper development and function. Through its intracellular lipid phosphatase activity may act in early compartments of the secretory pathway, regulating the formation of Golgi to endoplasmic reticulum retrograde transport carriers. Independently of this phosphatase activity may also function in the Wnt signaling pathway and the stabilization of beta-catenin/CTNNB1, thereby regulating cell proliferation, migration and differentiation in angiogenesis or yet in tumor growth. Also plays a role in integrin-mediated cell-cell adhesion in angiogenesis. This is Phospholipid phosphatase 3 from Bos taurus (Bovine).